Reading from the N-terminus, the 268-residue chain is Undecaprenyl-diphosphatase (268 aa).

7 helical membrane-spanning segments follow: residues 7–27, 87–107, 116–136, 146–166, 187–207, 210–230, and 247–267; these read IFNA…PISS, LIYH…LCIY, FYSI…TEIS, IETP…WPGF, VEFS…LDVI, FYDI…SAFI, and SLIP…LFFM.

This sequence belongs to the UppP family.

The protein resides in the cell membrane. The enzyme catalyses di-trans,octa-cis-undecaprenyl diphosphate + H2O = di-trans,octa-cis-undecaprenyl phosphate + phosphate + H(+). In terms of biological role, catalyzes the dephosphorylation of undecaprenyl diphosphate (UPP). Confers resistance to bacitracin. This chain is Undecaprenyl-diphosphatase, found in Buchnera aphidicola subsp. Baizongia pistaciae (strain Bp).